Here is a 448-residue protein sequence, read N- to C-terminus: Glutamyl-tRNA reductase (448 aa).

Residues Thr-48–Arg-51, Ser-100, Glu-105–Gln-107, and Gln-111 contribute to the substrate site. The active-site Nucleophile is Cys-49. Position 180 to 185 (Gly-180 to Gly-185) interacts with NADP(+).

The protein belongs to the glutamyl-tRNA reductase family. As to quaternary structure, homodimer.

It carries out the reaction (S)-4-amino-5-oxopentanoate + tRNA(Glu) + NADP(+) = L-glutamyl-tRNA(Glu) + NADPH + H(+). The protein operates within porphyrin-containing compound metabolism; protoporphyrin-IX biosynthesis; 5-aminolevulinate from L-glutamyl-tRNA(Glu): step 1/2. Functionally, catalyzes the NADPH-dependent reduction of glutamyl-tRNA(Glu) to glutamate 1-semialdehyde (GSA). This Methanosarcina mazei (strain ATCC BAA-159 / DSM 3647 / Goe1 / Go1 / JCM 11833 / OCM 88) (Methanosarcina frisia) protein is Glutamyl-tRNA reductase.